A 273-amino-acid polypeptide reads, in one-letter code: DNA replication complex GINS protein psf2 (273 aa).

Disordered stretches follow at residues 88-110 (KEDP…SQPG) and 240-273 (ASAE…DMGL). A compositionally biased stretch (basic and acidic residues) spans 244–257 (ATRREEEEEARRGG). Over residues 261 to 273 (GDGDEDSDEDMGL) the composition is skewed to acidic residues.

Belongs to the GINS2/PSF2 family. As to quaternary structure, component of the GINS complex which is a heterotetramer of div-26/sld5, drc-1/psf1, drc-2/psf2 and drc-3/psf3.

It is found in the nucleus. In terms of biological role, the GINS complex plays an essential role in the initiation of DNA replication. Has a role in chromosome segregation. The protein is DNA replication complex GINS protein psf2 (drc-2) of Neurospora crassa (strain ATCC 24698 / 74-OR23-1A / CBS 708.71 / DSM 1257 / FGSC 987).